The sequence spans 50 residues: Protein hunchback (50 aa).

3 C2H2-type zinc fingers span residues 1 to 5 (HLRNH), 11 to 33 (FKCNKCNYACVNKSMLNSHMKSH), and 39 to 50 (YRCADCTYATKY).

It belongs to the hunchback C2H2-type zinc-finger protein family.

It is found in the nucleus. Functionally, gap class segmentation protein that controls development of head structures. The protein is Protein hunchback (hb) of Platynereis dumerilii (Dumeril's clam worm).